Reading from the N-terminus, the 287-residue chain is 4,4'-diapophytoene synthase (287 aa).

Residues 18–21 (HSKS), tyrosine 41, and arginine 45 contribute to the (2E,6E)-farnesyl diphosphate site. The Mg(2+) site is built by aspartate 48 and aspartate 52. Glutamine 165 is a (2E,6E)-farnesyl diphosphate binding site. Asparagine 168 contacts Mg(2+). Position 171 (arginine 171) interacts with (2E,6E)-farnesyl diphosphate. Position 172 (aspartate 172) interacts with Mg(2+). (2E,6E)-farnesyl diphosphate is bound at residue tyrosine 248.

The protein belongs to the phytoene/squalene synthase family. CrtM subfamily. Requires Mg(2+) as cofactor.

The catalysed reaction is 2 (2E,6E)-farnesyl diphosphate = 15-cis-4,4'-diapophytoene + 2 diphosphate. It functions in the pathway carotenoid biosynthesis; staphyloxanthin biosynthesis; staphyloxanthin from farnesyl diphosphate: step 1/5. Its function is as follows. Involved in the biosynthesis of the yellow-orange carotenoid staphyloxanthin, which plays a role in the virulence via its protective function against oxidative stress. Catalyzes the head-to-head condensation of two molecules of farnesyl diphosphate (FPP) into the colorless C(30) carotenoid 4,4'-diapophytoene (dehydrosqualene). This chain is 4,4'-diapophytoene synthase (crtM), found in Staphylococcus aureus (strain bovine RF122 / ET3-1).